A 174-amino-acid chain; its full sequence is Envelope glycoprotein (174 aa).

Topologically, residues V1–L121 are extracellular. Residues A4 to L54 are a coiled coil. C60 and C67 form a disulfide bridge. Positions S72 to W102 form a coiled coil. The chain crosses the membrane as a helical span at residues L122–V142. S-palmitoyl cysteine; by host attachment occurs at residues C134 and C137. The Cytoplasmic portion of the chain corresponds to S143–V174.

This sequence belongs to the Alpharetroviruses envelope glycoprotein family. Heterodimer with the surface protein. The mature envelope protein (Env) consists of a trimer of SU-TM heterodimers attached by a labile interchain disulfide bond. In terms of processing, specific enzymatic cleavages in vivo yield mature proteins. Envelope glycoproteins are synthesized as an inactive precursor that is N-glycosylated and processed likely by host cell furin or by a furin-like protease in the Golgi to yield the mature SU and TM proteins. The cleavage site between SU and TM requires the minimal sequence [KR]-X-[KR]-R. Post-translationally, the transmembrane protein is palmitoylated. Palmitoylation is necessary for glycoprotein function and infectivity.

It is found in the virion membrane. The protein resides in the host cell membrane. Its function is as follows. The transmembrane protein (TM) acts as a class I viral fusion protein. Under the current model, the protein has at least 3 conformational states: pre-fusion native state, pre-hairpin intermediate state, and post-fusion hairpin state. During viral and target cell membrane fusion, the coiled coil regions (heptad repeats) assume a trimer-of-hairpins structure, positioning the fusion peptide in close proximity to the C-terminal region of the ectodomain. The formation of this structure appears to drive apposition and subsequent fusion of viral and target cell membranes. Membranes fusion leads to delivery of the nucleocapsid into the cytoplasm. The polypeptide is Envelope glycoprotein (env) (UR2 avian sarcoma virus (UR2SV)).